Here is a 189-residue protein sequence, read N- to C-terminus: UPF0301 protein RrIowa_0061 (189 aa).

It belongs to the UPF0301 (AlgH) family.

In Rickettsia rickettsii (strain Iowa), this protein is UPF0301 protein RrIowa_0061.